The primary structure comprises 185 residues: Large ribosomal subunit protein uL10 (185 aa).

The interval 165-185 (LRAKKEEQGGAGTPAPAEAAE) is disordered.

This sequence belongs to the universal ribosomal protein uL10 family. As to quaternary structure, part of the ribosomal stalk of the 50S ribosomal subunit. The N-terminus interacts with L11 and the large rRNA to form the base of the stalk. The C-terminus forms an elongated spine to which L12 dimers bind in a sequential fashion forming a multimeric L10(L12)X complex.

In terms of biological role, forms part of the ribosomal stalk, playing a central role in the interaction of the ribosome with GTP-bound translation factors. This chain is Large ribosomal subunit protein uL10, found in Streptomyces griseus subsp. griseus (strain JCM 4626 / CBS 651.72 / NBRC 13350 / KCC S-0626 / ISP 5235).